Here is a 293-residue protein sequence, read N- to C-terminus: Porphobilinogen deaminase (293 aa).

C235 bears the S-(dipyrrolylmethanemethyl)cysteine mark.

This sequence belongs to the HMBS family. Monomer. Requires dipyrromethane as cofactor.

The catalysed reaction is 4 porphobilinogen + H2O = hydroxymethylbilane + 4 NH4(+). Its pathway is porphyrin-containing compound metabolism; protoporphyrin-IX biosynthesis; coproporphyrinogen-III from 5-aminolevulinate: step 2/4. In terms of biological role, tetrapolymerization of the monopyrrole PBG into the hydroxymethylbilane pre-uroporphyrinogen in several discrete steps. This Ruminiclostridium cellulolyticum (strain ATCC 35319 / DSM 5812 / JCM 6584 / H10) (Clostridium cellulolyticum) protein is Porphobilinogen deaminase.